The following is a 304-amino-acid chain: Non-specific ribonucleoside hydrolase RihC (304 aa).

The active site involves histidine 233.

Belongs to the IUNH family. RihC subfamily.

In terms of biological role, hydrolyzes both purine and pyrimidine ribonucleosides with a broad-substrate specificity. This is Non-specific ribonucleoside hydrolase RihC from Shigella boydii serotype 4 (strain Sb227).